The primary structure comprises 474 residues: MYIKMATLANGQADNASLSTNGLGSSPGSAGHMNGLSHSPGNPSTIPMKDHDAIKLFIGQIPRNLDEKDLKPLFEEFGKIYELTVLKDRFTGMHKGCAFLTYCERESALKAQSALHEQKTLPGMNRPIQVKPADSESRGDRKLFVGMLNKQQSEDDVRRLFEAFGNIEECTILRGPDGNSKGCAFVKYSSHAEAQAAINALHGSQTMPGASSSLVVKFADTDKERTMRRMQQMAGQMGMFNPMAIPFGAYGAYAQALMQQQAALMASVAQGGYLNPMAAFAAAQMQQMAALNMNGLAAAPMTPTSGGSTPPGITAPAVPSIPSPIGVNGFTGLPPQANGQPAAEAVFANGIHPYPAQSPTAADPLQQAYAGVQQYAGPAYPAAYGQISQAFPQPPPMIPQQQREGPEGCNLFIYHLPQEFGDAELMQMFLPFGFVSFDNPASAQTAIQAMNGFQIGMKRLKVQLKRPKDANRPY.

The segment at 1–287 is sufficient for RNA-binding and MSE-dependent splicing activity; the sequence is MYIKMATLAN…AAFAAAQMQQ (287 aa). Over residues 18-28 the composition is skewed to polar residues; sequence LSTNGLGSSPG. A disordered region spans residues 18-41; sequence LSTNGLGSSPGSAGHMNGLSHSPG. RRM domains follow at residues 54 to 135 and 141 to 221; these read IKLF…PADS and RKLF…FADT. Residues 228–247 form a necessary for TNNT2 exon 5 inclusion region; sequence RRMQQMAGQMGMFNPMAIPF. The 76-residue stretch at 392–467 folds into the RRM 3 domain; it reads PQPPPMIPQQ…KRLKVQLKRP (76 aa).

It belongs to the CELF/BRUNOL family.

The protein localises to the nucleus. It localises to the cytoplasm. RNA-binding protein implicated in the regulation of pre-mRNA alternative splicing. Mediates exon inclusion and/or exclusion in pre-mRNA that are subject to tissue-specific and developmentally regulated alternative splicing. Specifically activates exon 5 inclusion of cardiac isoforms of TNNT2 during heart remodeling at the juvenile to adult transition. Promotes exclusion of both the smooth muscle (SM) and non-muscle (NM) exons in actinin pre-mRNAs. Activates the splicing of MAPT/Tau exon 10. Binds to muscle-specific splicing enhancer (MSE) intronic sites flanking the alternative exon 5 of TNNT2 pre-mRNA. The chain is CUGBP Elav-like family member 4 (CELF4) from Macaca fascicularis (Crab-eating macaque).